Reading from the N-terminus, the 495-residue chain is Dipeptide and tripeptide permease B (495 aa).

The Cytoplasmic segment spans residues Met1–Met16. The helical transmembrane segment at Ile17–Val37 threads the bilayer. At Tyr38–Ser50 the chain is on the periplasmic side. A helical membrane pass occupies residues Phe51–Val71. Over Gly72–Arg80 the chain is Cytoplasmic. Residues Thr81 to Leu101 traverse the membrane as a helical segment. The Periplasmic portion of the chain corresponds to Asn102–Asn104. A helical transmembrane segment spans residues Phe105–Ser125. Topologically, residues Ser126–Thr144 are cytoplasmic. A helical membrane pass occupies residues Leu145–Ala165. Residues Asn166–Tyr170 lie on the Periplasmic side of the membrane. A helical transmembrane segment spans residues Glu171–Leu191. Residues Arg192–Lys209 are Cytoplasmic-facing. Residues Thr210–Leu230 form a helical membrane-spanning segment. Gln231 is a topological domain (periplasmic). The helical transmembrane segment at Asn232 to Leu252 threads the bilayer. Residues Lys253–Lys265 lie on the Cytoplasmic side of the membrane. Residues Met266–Met286 form a helical membrane-spanning segment. Topologically, residues Pro287 to Pro309 are periplasmic. The chain crosses the membrane as a helical span at residues Val310–Leu330. The Cytoplasmic portion of the chain corresponds to Tyr331–Thr348. Residues Val349 to Ala369 form a helical membrane-spanning segment. The Periplasmic portion of the chain corresponds to Asp370–Gly373. A helical transmembrane segment spans residues Met374 to Ile394. The Cytoplasmic segment spans residues Ser395–Arg409. The chain crosses the membrane as a helical span at residues Leu410–Gly430. Residues Tyr431 to Glu454 lie on the Periplasmic side of the membrane. A helical transmembrane segment spans residues Leu455–Pro475. Residues Lys476–Pro495 are Cytoplasmic-facing.

This sequence belongs to the major facilitator superfamily. Proton-dependent oligopeptide transporter (POT/PTR) (TC 2.A.17) family. DtpB subfamily.

The protein localises to the cell inner membrane. Functionally, proton-dependent permease that transports di- and tripeptides. This chain is Dipeptide and tripeptide permease B, found in Aliivibrio fischeri (strain MJ11) (Vibrio fischeri).